A 101-amino-acid polypeptide reads, in one-letter code: UPF0473 protein LAF_0524 (101 aa).

The protein belongs to the UPF0473 family.

In Limosilactobacillus fermentum (strain NBRC 3956 / LMG 18251) (Lactobacillus fermentum), this protein is UPF0473 protein LAF_0524.